We begin with the raw amino-acid sequence, 37 residues long: Large ribosomal subunit protein bL36 (37 aa).

Belongs to the bacterial ribosomal protein bL36 family.

This is Large ribosomal subunit protein bL36 from Vibrio atlanticus (strain LGP32) (Vibrio splendidus (strain Mel32)).